Here is a 272-residue protein sequence, read N- to C-terminus: MKNTGKRIDLIANRKPQSQRVLYELRDRLKRNQFILNDTNPDIVISIGGDGMLLSAFHKYENQLDKVRFIGLHTGHLGFYTDYRDFELDKLVTNLQLDTGARVSYPVLNVKVFLENGEVKIFRALNEASIRRSDRTMVADIVINGVPFERFRGDGLTVSTPTGSTAYNKSLGGAVLHPTIEALQLTEIASLNNRVYRTLGSSIIVPKKDKIELIPTRNDYHTISVDNSVYSFRNIERIEYQIDHHKIHFVATPSHTSFWNRVKDAFIGEVDE.

Catalysis depends on aspartate 50, which acts as the Proton acceptor. Residues 50–51, 126–127, arginine 152, aspartate 154, 165–170, and alanine 189 each bind NAD(+); these read DG, NE, and TAYNKS.

The protein belongs to the NAD kinase family. A divalent metal cation serves as cofactor.

The protein resides in the cytoplasm. It catalyses the reaction NAD(+) + ATP = ADP + NADP(+) + H(+). Involved in the regulation of the intracellular balance of NAD and NADP, and is a key enzyme in the biosynthesis of NADP. Catalyzes specifically the phosphorylation on 2'-hydroxyl of the adenosine moiety of NAD to yield NADP. The sequence is that of NAD kinase from Streptococcus pneumoniae (strain 70585).